The sequence spans 228 residues: Cytidylate kinase (228 aa).

Position 12–20 (12–20) interacts with ATP; sequence GPASAGKST.

Belongs to the cytidylate kinase family. Type 1 subfamily.

Its subcellular location is the cytoplasm. The catalysed reaction is CMP + ATP = CDP + ADP. It catalyses the reaction dCMP + ATP = dCDP + ADP. The sequence is that of Cytidylate kinase from Lactiplantibacillus plantarum (strain ATCC BAA-793 / NCIMB 8826 / WCFS1) (Lactobacillus plantarum).